The sequence spans 208 residues: MARYLGPKLKLSRREGTDLFLKSGVRAIESKCRNRLDVAPGQHGARKPRLSDYGSQLREKQKVRRIYGILERQFRNYYTEANRLKGNTGENLLVLLEGRLDNVVYRMGFAATRAEARQLVSHKSIVVNGRVVNIPSYQVSVDDVVAVREKSKKQARIKASLELATQREKPTWLEVDATKMEGVFKRTPERSDLSADINEHLIVELYSK.

Positions 98–158 constitute an S4 RNA-binding domain; sequence GRLDNVVYRM…EKSKKQARIK (61 aa).

This sequence belongs to the universal ribosomal protein uS4 family. Part of the 30S ribosomal subunit. Contacts protein S5. The interaction surface between S4 and S5 is involved in control of translational fidelity.

Its function is as follows. One of the primary rRNA binding proteins, it binds directly to 16S rRNA where it nucleates assembly of the body of the 30S subunit. In terms of biological role, with S5 and S12 plays an important role in translational accuracy. The polypeptide is Small ribosomal subunit protein uS4 (Actinobacillus pleuropneumoniae serotype 5b (strain L20)).